The following is a 266-amino-acid chain: Translation initiation factor 2 subunit alpha (266 aa).

One can recognise an S1 motif domain in the interval 12-83 (GEILIATVKQ…RKGTVDVSLK (72 aa)).

Belongs to the eIF-2-alpha family. As to quaternary structure, heterotrimer composed of an alpha, a beta and a gamma chain.

EIF-2 functions in the early steps of protein synthesis by forming a ternary complex with GTP and initiator tRNA. This chain is Translation initiation factor 2 subunit alpha, found in Saccharolobus islandicus (strain L.S.2.15 / Lassen #1) (Sulfolobus islandicus).